The primary structure comprises 467 residues: Ribosomal RNA small subunit methyltransferase F (467 aa).

S-adenosyl-L-methionine-binding positions include 119–125 (ASAPGSK), E143, D170, and D188. C241 functions as the Nucleophile in the catalytic mechanism.

Belongs to the class I-like SAM-binding methyltransferase superfamily. RsmB/NOP family.

The protein localises to the cytoplasm. It carries out the reaction cytidine(1407) in 16S rRNA + S-adenosyl-L-methionine = 5-methylcytidine(1407) in 16S rRNA + S-adenosyl-L-homocysteine + H(+). In terms of biological role, specifically methylates the cytosine at position 1407 (m5C1407) of 16S rRNA. The polypeptide is Ribosomal RNA small subunit methyltransferase F (Shewanella amazonensis (strain ATCC BAA-1098 / SB2B)).